The sequence spans 301 residues: F1 operon positive regulatory protein (301 aa).

One can recognise an HTH araC/xylS-type domain in the interval 8–107 (NSIIQYIEEN…GYTPRQYRMI (100 aa)). 2 consecutive DNA-binding regions (H-T-H motif) follow at residues 26 to 47 (DCLV…KEYV) and 74 to 97 (IIEI…KKIF).

Functionally, positive regulator of F1 operon expression. This is F1 operon positive regulatory protein (caf1R) from Yersinia pestis.